Consider the following 451-residue polypeptide: Phosphoglucosamine mutase (451 aa).

Ser-102 acts as the Phosphoserine intermediate in catalysis. Mg(2+) contacts are provided by Ser-102, Asp-243, Asp-245, and Asp-247. Position 102 is a phosphoserine (Ser-102).

The protein belongs to the phosphohexose mutase family. It depends on Mg(2+) as a cofactor. Activated by phosphorylation.

It carries out the reaction alpha-D-glucosamine 1-phosphate = D-glucosamine 6-phosphate. In terms of biological role, catalyzes the conversion of glucosamine-6-phosphate to glucosamine-1-phosphate. This is Phosphoglucosamine mutase from Salinispora arenicola (strain CNS-205).